A 2462-amino-acid polypeptide reads, in one-letter code: Serine/threonine-protein kinase Wnk (2462 aa).

Disordered stretches follow at residues 18–133 (NRAR…ASKS), 146–248 (NTLP…KSSS), and 365–461 (EDDV…DDDP). Polar residues-rich tracts occupy residues 29 to 58 (DGTTSCTTQPQRNTSISSEEQTVQGANIQK) and 65 to 78 (NRSASSRQKPNPTS). Low complexity predominate over residues 94–124 (TLSAHTSTSSTTSIQSSPIEPASSLPTLNTT). Over residues 146 to 155 (NTLPGKTASS) the composition is skewed to polar residues. Composition is skewed to basic and acidic residues over residues 190 to 205 (QSREQNEDEMDSKIEP), 237 to 247 (DTKKMEARKSS), and 396 to 413 (QSEKQAKSFDDITKKAES). Positions 414–452 (SEASAEEAAVTGSSTDASASPLPSTSLVSTTSSATSITK) are enriched in low complexity. Residues 471 to 729 (FKYDKEVGRG…CNELLESEFF (259 aa)) enclose the Protein kinase domain. ATP contacts are provided by residues serine 481, 551–554 (TELM), and lysine 601. The active-site Proton acceptor is aspartate 618. Phosphoserine; by autocatalysis is present on residues serine 628 and serine 632. 3 disordered regions span residues 844–873 (LQKQRESLPTNVDEDEEEEEESEDEEDGVK), 893–923 (LALSTNSVEPQQLSTRSNTSIPNSGIQQPVQ), and 1006–1055 (PQQQ…LQQQ). Residues 855–870 (VDEDEEEEEESEDEED) are compositionally biased toward acidic residues. Residues 893 to 918 (LALSTNSVEPQQLSTRSNTSIPNSGI) are compositionally biased toward polar residues. Low complexity-rich tracts occupy residues 1006–1034 (PQQQVNQQQQQPQMMQQIPQQVQVQQPQT) and 1041–1055 (HEQQPQQQQQPLQQQ). Positions 1142–1178 (AQHQLQQLQQQQLQQQQLQQQQQIQQQQLQQQQLQQQ) form a coiled coil. Over residues 1236–1251 (QGGQVTLSDAQQQQHP) the composition is skewed to polar residues. 9 disordered regions span residues 1236-1256 (QGGQVTLSDAQQQQHPGFSAV), 1322-1382 (QQQQ…EQIS), 1418-1465 (GALE…PKLS), 1554-1578 (LTRQRSTFRSHQRHRSRDETASDIT), 1615-1699 (NIPN…KDKK), 1762-1790 (DTSENAQQATEAEAEKPKDKSGQAVGNQG), 1828-1895 (QASP…SVGS), 1929-1966 (HEKQLSKQPSLEKPSATSILTNNSDPPQRNPSNGSINQ), and 2122-2229 (THVQ…FIQS). Residues 1559-1568 (STFRSHQRHR) show a composition bias toward basic residues. Residues 1627–1641 (STPPTTTSTMSSSST) show a composition bias toward low complexity. Polar residues predominate over residues 1642–1674 (ASRDAPNSSNDVTIGSGSVSRKTSTASEYTSLS). Composition is skewed to polar residues over residues 1828–1852 (QASPAMSSLKATSGQPQTQEITKPN), 1861–1894 (SVGQNTPTAALTSARGSGSSVYNSRRTSIDNSVG), and 1943–1966 (SATSILTNNSDPPQRNPSNGSINQ). Over residues 2125–2136 (QQPSNLQPQQQS) the composition is skewed to low complexity. Polar residues predominate over residues 2137–2160 (VHPNMTQQPQQTPLNGHPSMVNTL). Positions 2161–2211 (QQQPPQQSLPMQTIQSQQQQHNQMPIISQQQQQQILMQQQQQQGSQQGSQQ) are enriched in low complexity. Over residues 2212 to 2229 (FNLPGTQQTHPQHQFIQS) the composition is skewed to polar residues.

This sequence belongs to the protein kinase superfamily. Ser/Thr protein kinase family. WNK subfamily. Requires Mg(2+) as cofactor. In terms of processing, autophosphorylated. Autophosphorylation at Ser-628 and Ser-632 promotes its activity.

It is found in the cytoplasm. The enzyme catalyses L-seryl-[protein] + ATP = O-phospho-L-seryl-[protein] + ADP + H(+). It catalyses the reaction L-threonyl-[protein] + ATP = O-phospho-L-threonyl-[protein] + ADP + H(+). Its activity is regulated as follows. Activated in response to hyperosmotic stress: cell shrinkage promotes formation of a membraneless compartment that concentrates wnk-1 with its downstrem substrates. Activation requires autophosphorylation. Autophosphorylation and subsequent activation is inhibited by increases in intracellular Cl(-) or K(+). Its function is as follows. Serine/threonine-protein kinase component of the WNK-SPAK/OSR1 kinase cascade, which plays an important role in the regulation of electrolyte homeostasis and regulatory volume increase in response to hyperosmotic stress. Wnk mediates regulatory volume increase in response to hyperosmotic stress by acting as a molecular crowding sensor, which senses cell shrinkage and mediates formation of a membraneless compartment by undergoing liquid-liquid phase separation. The membraneless compartment concentrates Wnk with its substrate Fray, promoting Wnk-dependent phosphorylation and activation of downstream kinase Fray. Following activation, Fray catalyzes phosphorylation of ion cotransporters Ncc69 and Irk1, regulating their activity. Phosphorylation of Na-K-Cl cotransporter Ncc69 promotes its activation and ion influx. Involved in circadian rhythms in small ventral lateral (sLNv) pacemaker neurons: in the morning, Wnk activity is repressed by high levels of intracellular chloride; in contrast Wnk activation in the evening promotes the activation of the inwardly rectifying potassium channel Irk1 via Fray. Acts as a positive regulator of the canonical Wnt signaling pathway during wing disk development. This Drosophila melanogaster (Fruit fly) protein is Serine/threonine-protein kinase Wnk.